A 132-amino-acid chain; its full sequence is L-ectoine synthase (132 aa).

This sequence belongs to the ectoine synthase family.

It catalyses the reaction (2S)-4-acetamido-2-aminobutanoate = L-ectoine + H2O. Its pathway is amine and polyamine biosynthesis; ectoine biosynthesis; L-ectoine from L-aspartate 4-semialdehyde: step 3/3. Its function is as follows. Catalyzes the circularization of gamma-N-acetyl-alpha,gamma-diaminobutyric acid (ADABA) to ectoine (1,4,5,6-tetrahydro-2-methyl-4-pyrimidine carboxylic acid), which is an excellent osmoprotectant. This chain is L-ectoine synthase (ectC), found in Streptomyces anulatus (Streptomyces chrysomallus).